We begin with the raw amino-acid sequence, 132 residues long: Large ribosomal subunit protein bL17 (132 aa).

It belongs to the bacterial ribosomal protein bL17 family. In terms of assembly, part of the 50S ribosomal subunit. Contacts protein L32.

The sequence is that of Large ribosomal subunit protein bL17 from Cellvibrio japonicus (strain Ueda107) (Pseudomonas fluorescens subsp. cellulosa).